Consider the following 891-residue polypeptide: Alanine--tRNA ligase (891 aa).

Residues His-564, His-568, Cys-677, and His-681 each coordinate Zn(2+).

The protein belongs to the class-II aminoacyl-tRNA synthetase family. It depends on Zn(2+) as a cofactor.

It localises to the cytoplasm. The enzyme catalyses tRNA(Ala) + L-alanine + ATP = L-alanyl-tRNA(Ala) + AMP + diphosphate. In terms of biological role, catalyzes the attachment of alanine to tRNA(Ala) in a two-step reaction: alanine is first activated by ATP to form Ala-AMP and then transferred to the acceptor end of tRNA(Ala). Also edits incorrectly charged Ser-tRNA(Ala) and Gly-tRNA(Ala) via its editing domain. The polypeptide is Alanine--tRNA ligase (Bradyrhizobium sp. (strain ORS 278)).